Here is a 443-residue protein sequence, read N- to C-terminus: Threonine/serine transporter TdcC (443 aa).

Helical transmembrane passes span 22 to 42 (TTWTLGLFGTAIGAGVLFFPI), 44 to 64 (AGFGGLIPILLMLVLAYPIAF), 97 to 117 (GVVITFLYFFAICPLLWIYGV), 140 to 160 (VVALFLLLLMAFVIWFGKDLM), 163 to 183 (VMSYLVWPFIASLVLISLSLI), 207 to 227 (ILVTVWLGISIMVFSFNFSPI), 259 to 279 (ASMLMVAVVMFFAFSCLFTLS), 319 to 339 (ASIIALVAIFKSFFGHYLGTL), 366 to 386 (ISMIFIMGSTWIVAYANPNIL), 389 to 409 (IEAMGAPIIASLLCLLPMYAI), and 423 to 443 (DNVFVTLIGLLTILNIVYKLF).

The protein belongs to the amino acid/polyamine transporter 2 family. SdaC/TdcC subfamily.

The protein resides in the cell inner membrane. The catalysed reaction is L-threonine(in) + H(+)(in) = L-threonine(out) + H(+)(out). It catalyses the reaction L-serine(in) + H(+)(in) = L-serine(out) + H(+)(out). Involved in the import of threonine and serine into the cell, with the concomitant import of a proton (symport system). This is Threonine/serine transporter TdcC from Salmonella arizonae (strain ATCC BAA-731 / CDC346-86 / RSK2980).